The following is a 209-amino-acid chain: Ribosomal RNA large subunit methyltransferase E (209 aa).

The S-adenosyl-L-methionine site is built by Gly63, Trp65, Asp83, Asp99, and Asp124. Lys164 serves as the catalytic Proton acceptor.

This sequence belongs to the class I-like SAM-binding methyltransferase superfamily. RNA methyltransferase RlmE family.

It is found in the cytoplasm. It catalyses the reaction uridine(2552) in 23S rRNA + S-adenosyl-L-methionine = 2'-O-methyluridine(2552) in 23S rRNA + S-adenosyl-L-homocysteine + H(+). In terms of biological role, specifically methylates the uridine in position 2552 of 23S rRNA at the 2'-O position of the ribose in the fully assembled 50S ribosomal subunit. The protein is Ribosomal RNA large subunit methyltransferase E of Pseudoalteromonas atlantica (strain T6c / ATCC BAA-1087).